A 261-amino-acid polypeptide reads, in one-letter code: uncharacterized protein (261 aa).

The N-terminal stretch at 1–22 (MIHSKKLTLGICLVLLIILIGG) is a signal peptide. C23 carries the N-palmitoyl cysteine lipid modification. The S-diacylglycerol cysteine moiety is linked to residue C23.

This sequence belongs to the staphylococcal tandem lipoprotein family.

The protein resides in the cell membrane. This is an uncharacterized protein from Staphylococcus aureus (strain NCTC 8325 / PS 47).